Consider the following 215-residue polypeptide: Adenylate kinase (215 aa).

Position 10–15 (G10–T15) interacts with ATP. An NMP region spans residues S30–V59. AMP-binding positions include T31, R36, E57 to V59, G85 to R88, and Q92. The interval G126 to D163 is LID. R127 contributes to the ATP binding site. Zn(2+)-binding residues include C130 and C133. T136 to Y137 is an ATP binding site. Zn(2+)-binding residues include C150 and D153. R160 and R171 together coordinate AMP. ATP is bound at residue K199.

This sequence belongs to the adenylate kinase family. In terms of assembly, monomer.

The protein localises to the cytoplasm. The enzyme catalyses AMP + ATP = 2 ADP. It functions in the pathway purine metabolism; AMP biosynthesis via salvage pathway; AMP from ADP: step 1/1. Functionally, catalyzes the reversible transfer of the terminal phosphate group between ATP and AMP. Plays an important role in cellular energy homeostasis and in adenine nucleotide metabolism. The chain is Adenylate kinase from Staphylococcus aureus (strain COL).